Here is a 162-residue protein sequence, read N- to C-terminus: Small ribosomal subunit protein uS9 (162 aa).

This sequence belongs to the universal ribosomal protein uS9 family.

In Methylobacterium sp. (strain 4-46), this protein is Small ribosomal subunit protein uS9.